The chain runs to 78 residues: Small ribosomal subunit protein bS18 (78 aa).

The protein belongs to the bacterial ribosomal protein bS18 family. Part of the 30S ribosomal subunit. Forms a tight heterodimer with protein bS6.

Its function is as follows. Binds as a heterodimer with protein bS6 to the central domain of the 16S rRNA, where it helps stabilize the platform of the 30S subunit. In Kineococcus radiotolerans (strain ATCC BAA-149 / DSM 14245 / SRS30216), this protein is Small ribosomal subunit protein bS18.